The sequence spans 741 residues: Zinc finger and BTB domain-containing protein 20 (741 aa).

Residues 1-17 (MLERKKPKTAENQKASE) show a composition bias toward basic and acidic residues. The disordered stretch occupies residues 1 to 32 (MLERKKPKTAENQKASEENEITQPGGSSAKPG). The 64-residue stretch at 104 to 167 (CDVTVRIHGS…MYSGVLRVSQ (64 aa)) folds into the BTB domain. The interval 203–235 (GIQDSGQDTPRGTPESGTSGQSSDTESGYLQSH) is disordered. A compositionally biased stretch (polar residues) spans 206 to 235 (DSGQDTPRGTPESGTSGQSSDTESGYLQSH). Phosphothreonine is present on Thr211. Lys330 is covalently cross-linked (Glycyl lysine isopeptide (Lys-Gly) (interchain with G-Cter in SUMO1); alternate). Residue Lys330 forms a Glycyl lysine isopeptide (Lys-Gly) (interchain with G-Cter in SUMO2); alternate linkage. Residues 350–440 (RNESEECTED…SSPERSNEVE (91 aa)) are disordered. Ser353 carries the post-translational modification Phosphoserine. A compositionally biased stretch (acidic residues) spans 354-367 (EECTEDTDQAEGTE). Phosphothreonine is present on Thr357. Lys371 participates in a covalent cross-link: Glycyl lysine isopeptide (Lys-Gly) (interchain with G-Cter in SUMO2). The span at 404–423 (AEPTQPEQAAEAPAEGGPQT) shows a compositional bias: low complexity. A compositionally biased stretch (polar residues) spans 424-434 (NQLETGASSPE). 4 C2H2-type zinc fingers span residues 578 to 600 (YECT…MFVH), 606 to 628 (HQCS…MVTH), 634 to 656 (YQCS…MRLH), and 662 to 684 (YECY…VALH). A phosphothreonine mark is found at Thr690 and Thr695. The C2H2-type 5 zinc finger occupies 715–737 (YVCSVCPAKFDQIEQFNDHMRMH). Residue Lys723 forms a Glycyl lysine isopeptide (Lys-Gly) (interchain with G-Cter in SUMO2) linkage.

As to quaternary structure, can homodimerize. Binds to DNA. In terms of processing, sumoylated with SUMO1. As to expression, expressed in spleen, lymph node, thymus, peripheral blood leukocytes, and fetal liver.

It is found in the nucleus. Its function is as follows. May be a transcription factor that may be involved in hematopoiesis, oncogenesis, and immune responses. Plays a role in postnatal myogenesis, may be involved in the regulation of satellite cells self-renewal. This Homo sapiens (Human) protein is Zinc finger and BTB domain-containing protein 20 (ZBTB20).